The following is a 514-amino-acid chain: MQQLNPSEISEIIKQRIEKSNVAAQARNEGTVVSVSDGIVRIYGLADVMYGEMIEFPGGIFGMALNLEQDSVGAVVLGNYLGLTEGMSAKCTGRILEVPVGPELLGRVVDALGNPIDGKGPINAQATDAVEKVAPGVIWRKSVDQPVQTGYKSVDAMIPVGRGQRELIIGDRQIGKTALAIDAIINQKNSGIRCVYVAIGQKQSTIANVVRKLEEHGALQNTIVVAASASESAALQYLAPYAGCTMGEYFRDRGEDALIVYDDLSKQAVAYRQISLLLRRPPGREAYPGDVFYLHSRLLERASRVSEEYVEKFTNGAVTGKTGSLTALPIIETQAGDVSAFVPTNVISITDGQIFLESAMFNAGIRPAVNAGISVSRVGGAAQTKIVKKLSGGIRTALAQYRELAAFAQFASDLDEATRKQLEHGQRVTELMKQKQYAPMSIADMSLSLYAAERGYLADVEVAKVGAFEQALIAFFNREFADLMARINVKGDFNDEIDAGLKAGIEKFKATQSW.

170 to 177 provides a ligand contact to ATP; it reads GDRQIGKT.

Belongs to the ATPase alpha/beta chains family. In terms of assembly, F-type ATPases have 2 components, CF(1) - the catalytic core - and CF(0) - the membrane proton channel. CF(1) has five subunits: alpha(3), beta(3), gamma(1), delta(1), epsilon(1). CF(0) has three main subunits: a(1), b(2) and c(9-12). The alpha and beta chains form an alternating ring which encloses part of the gamma chain. CF(1) is attached to CF(0) by a central stalk formed by the gamma and epsilon chains, while a peripheral stalk is formed by the delta and b chains.

Its subcellular location is the cell inner membrane. It carries out the reaction ATP + H2O + 4 H(+)(in) = ADP + phosphate + 5 H(+)(out). Functionally, produces ATP from ADP in the presence of a proton gradient across the membrane. The alpha chain is a regulatory subunit. The protein is ATP synthase subunit alpha of Stutzerimonas stutzeri (strain A1501) (Pseudomonas stutzeri).